Reading from the N-terminus, the 437-residue chain is Adenylosuccinate synthetase (437 aa).

Residues 25–31 (GDEGKGK), 53–55 (GHT), and Lys-62 each bind GTP. The active-site Proton acceptor is Asp-26. Positions 26 and 53 each coordinate Mg(2+). Residues 26-29 (DEGK) and 51-54 (NAGH) each bind IMP. Catalysis depends on His-54, which acts as the Proton donor. Thr-141, Arg-155, Asn-232, and Thr-247 together coordinate IMP. Thr-307 contributes to the GTP binding site. 307-313 (TTTKRPR) lines the substrate pocket. Arg-311 serves as a coordination point for IMP. GTP-binding positions include Arg-313, 339-341 (KLD), and 425-427 (GVG).

This sequence belongs to the adenylosuccinate synthetase family. In terms of assembly, homodimer. The cofactor is Mg(2+).

Its subcellular location is the cytoplasm. The catalysed reaction is IMP + L-aspartate + GTP = N(6)-(1,2-dicarboxyethyl)-AMP + GDP + phosphate + 2 H(+). It functions in the pathway purine metabolism; AMP biosynthesis via de novo pathway; AMP from IMP: step 1/2. Plays an important role in the salvage pathway for purine nucleotide biosynthesis. Catalyzes the first committed step in the biosynthesis of AMP from IMP. In Plasmodium knowlesi (strain H), this protein is Adenylosuccinate synthetase.